The primary structure comprises 196 residues: Holliday junction branch migration complex subunit RuvA (196 aa).

The tract at residues 1–69 (MIVGLRGTII…EDAHLLFGFC (69 aa)) is domain I. The segment at 70 to 148 (EEIEKQTFER…QLLQSQEESI (79 aa)) is domain II. A flexible linker region spans residues 149–157 (APSNNLKYE). Residues 157-196 (EASLALQSLGFKRNEIQKVLEHIEALSVSEIVKEALKRLA) are domain III.

This sequence belongs to the RuvA family. Homotetramer. Forms an RuvA(8)-RuvB(12)-Holliday junction (HJ) complex. HJ DNA is sandwiched between 2 RuvA tetramers; dsDNA enters through RuvA and exits via RuvB. An RuvB hexamer assembles on each DNA strand where it exits the tetramer. Each RuvB hexamer is contacted by two RuvA subunits (via domain III) on 2 adjacent RuvB subunits; this complex drives branch migration. In the full resolvosome a probable DNA-RuvA(4)-RuvB(12)-RuvC(2) complex forms which resolves the HJ.

The protein localises to the cytoplasm. Functionally, the RuvA-RuvB-RuvC complex processes Holliday junction (HJ) DNA during genetic recombination and DNA repair, while the RuvA-RuvB complex plays an important role in the rescue of blocked DNA replication forks via replication fork reversal (RFR). RuvA specifically binds to HJ cruciform DNA, conferring on it an open structure. The RuvB hexamer acts as an ATP-dependent pump, pulling dsDNA into and through the RuvAB complex. HJ branch migration allows RuvC to scan DNA until it finds its consensus sequence, where it cleaves and resolves the cruciform DNA. The chain is Holliday junction branch migration complex subunit RuvA from Helicobacter hepaticus (strain ATCC 51449 / 3B1).